The sequence spans 93 residues: Large ribosomal subunit protein uL23cz/uL23cy (93 aa).

This sequence belongs to the universal ribosomal protein uL23 family. In terms of assembly, part of the 50S ribosomal subunit.

The protein resides in the plastid. The protein localises to the chloroplast. Binds to 23S rRNA. In Acorus calamus (Sweet flag), this protein is Large ribosomal subunit protein uL23cz/uL23cy (rpl23-A).